Consider the following 199-residue polypeptide: FMN-dependent NADH:quinone oxidoreductase 1 (199 aa).

FMN is bound by residues Ser10, 17–19, and 87–90; these read SNS and MYNF.

The protein belongs to the azoreductase type 1 family. Homodimer. FMN serves as cofactor.

The catalysed reaction is 2 a quinone + NADH + H(+) = 2 a 1,4-benzosemiquinone + NAD(+). It catalyses the reaction N,N-dimethyl-1,4-phenylenediamine + anthranilate + 2 NAD(+) = 2-(4-dimethylaminophenyl)diazenylbenzoate + 2 NADH + 2 H(+). In terms of biological role, quinone reductase that provides resistance to thiol-specific stress caused by electrophilic quinones. Functionally, also exhibits azoreductase activity. Catalyzes the reductive cleavage of the azo bond in aromatic azo compounds to the corresponding amines. The polypeptide is FMN-dependent NADH:quinone oxidoreductase 1 (Mesoplasma florum (strain ATCC 33453 / NBRC 100688 / NCTC 11704 / L1) (Acholeplasma florum)).